A 151-amino-acid polypeptide reads, in one-letter code: MLP-like protein 168 (151 aa).

It belongs to the MLP family.

The polypeptide is MLP-like protein 168 (MLP168) (Arabidopsis thaliana (Mouse-ear cress)).